The chain runs to 137 residues: Drosulfakinins (137 aa).

A signal peptide spans 1-31 (MGLRSCTHFATLVIPLWALAFCFLVVVPVPA). A propeptide spanning residues 32 to 74 (QTNLQTSKGDRRLQDLESNMGAESDQPNANLVRPSLSRFGDKR) is cleaved from the precursor. Residue Phe81 is modified to Phenylalanine amide. Positions 85–107 (VPRPMIPIELDLLMDNDDENTKA) are excised as a propeptide. A Sulfotyrosine modification is found at Tyr113. A Phenylalanine amide modification is found at Phe118. Position 130 is a sulfotyrosine (Tyr130). The residue at position 135 (Phe135) is a Phenylalanine amide.

It belongs to the gastrin/cholecystokinin family.

The protein resides in the secreted. Functionally, drosulfakinin-0 (DSK 0) plays diverse biological roles including regulating gut muscle contraction in adults but not in larvae. This Drosophila yakuba (Fruit fly) protein is Drosulfakinins.